The chain runs to 443 residues: Putative phosphoribosyl transferase MT0597 (443 aa).

This sequence in the N-terminal section; belongs to the purine/pyrimidine phosphoribosyltransferase family. The protein in the C-terminal section; belongs to the dienelactone hydrolase family.

The sequence is that of Putative phosphoribosyl transferase MT0597 from Mycobacterium tuberculosis (strain CDC 1551 / Oshkosh).